The following is a 502-amino-acid chain: CBL-interacting serine/threonine-protein kinase 13 (502 aa).

Positions 32–51 are disordered; it reads TNKETSTPESPRSPRTPQGS. A compositionally biased stretch (low complexity) spans 35-48; that stretch reads ETSTPESPRSPRTP. One can recognise a Protein kinase domain in the interval 57 to 311; sequence YEIGKLLGHG…IPEIMKHRWF (255 aa). ATP is bound by residues 63-71 and K86; that span reads LGHGSFAKV. D179 acts as the Proton acceptor in catalysis. Residues 197 to 226 form an activation loop region; that stretch reads DFGLSVVSEQLKQEGICQTFCGTPAYLAPE. Position 201 is a phosphoserine (S201). T215 is modified (phosphothreonine). Positions 331-359 are disordered; it reads DDDNDDDDSSSLSSGRSSTASEGDAEFDI. Residues 340 to 352 show a composition bias toward low complexity; it reads SSLSSGRSSTASE. One can recognise an NAF domain in the interval 366 to 387; it reads PRPASLNAFDILSFSDLSGLFE. Residues 390–419 form a PPI region; it reads GQGARFVSAAPMTKIISKLEEIAKEVKFMV.

Belongs to the protein kinase superfamily. CAMK Ser/Thr protein kinase family. SNF1 subfamily. As to quaternary structure, interacts with CBL2 and CBL3. Requires Mn(2+) as cofactor.

The enzyme catalyses L-seryl-[protein] + ATP = O-phospho-L-seryl-[protein] + ADP + H(+). It carries out the reaction L-threonyl-[protein] + ATP = O-phospho-L-threonyl-[protein] + ADP + H(+). In terms of biological role, CIPK serine-threonine protein kinases interact with CBL proteins. Binding of a CBL protein to the regulatory NAF domain of CIPK protein lead to the activation of the kinase in a calcium-dependent manner. The protein is CBL-interacting serine/threonine-protein kinase 13 (CIPK13) of Arabidopsis thaliana (Mouse-ear cress).